Here is an 85-residue protein sequence, read N- to C-terminus: Large ribosomal subunit protein bL27 (85 aa).

The protein belongs to the bacterial ribosomal protein bL27 family.

The protein is Large ribosomal subunit protein bL27 of Solibacter usitatus (strain Ellin6076).